Consider the following 186-residue polypeptide: Cell division protein ZapC (186 aa).

Belongs to the ZapC family. As to quaternary structure, interacts directly with FtsZ.

The protein localises to the cytoplasm. Contributes to the efficiency of the cell division process by stabilizing the polymeric form of the cell division protein FtsZ. Acts by promoting interactions between FtsZ protofilaments and suppressing the GTPase activity of FtsZ. This is Cell division protein ZapC from Musicola paradisiaca (strain Ech703) (Dickeya paradisiaca).